Reading from the N-terminus, the 135-residue chain is Large ribosomal subunit protein uL16 (135 aa).

Belongs to the universal ribosomal protein uL16 family. As to quaternary structure, part of the 50S ribosomal subunit.

Binds 23S rRNA and is also seen to make contacts with the A and possibly P site tRNAs. The sequence is that of Large ribosomal subunit protein uL16 from Desulfatibacillum aliphaticivorans.